The sequence spans 284 residues: Shikimate dehydrogenase (NADP(+)) (284 aa).

Shikimate is bound by residues 20–22 (SIS) and Ser-67. Lys-71 (proton acceptor) is an active-site residue. Asp-83 contributes to the NADP(+) binding site. Residues Asn-92 and Asp-107 each contribute to the shikimate site. NADP(+) is bound by residues 129–133 (GAGGA) and Ile-227. Tyr-229 contacts shikimate. NADP(+) is bound at residue Gly-250.

This sequence belongs to the shikimate dehydrogenase family. Homodimer.

The enzyme catalyses shikimate + NADP(+) = 3-dehydroshikimate + NADPH + H(+). It functions in the pathway metabolic intermediate biosynthesis; chorismate biosynthesis; chorismate from D-erythrose 4-phosphate and phosphoenolpyruvate: step 4/7. Functionally, involved in the biosynthesis of the chorismate, which leads to the biosynthesis of aromatic amino acids. Catalyzes the reversible NADPH linked reduction of 3-dehydroshikimate (DHSA) to yield shikimate (SA). The protein is Shikimate dehydrogenase (NADP(+)) of Streptococcus pneumoniae (strain P1031).